The sequence spans 118 residues: Large ribosomal subunit protein uL18 (118 aa).

A disordered region spans residues 1–25 (MITKPDKNKVRQKRHRRVRGKLSGT). The segment covering 10–20 (VRQKRHRRVRG) has biased composition (basic residues).

This sequence belongs to the universal ribosomal protein uL18 family. In terms of assembly, part of the 50S ribosomal subunit; part of the 5S rRNA/L5/L18/L25 subcomplex. Contacts the 5S and 23S rRNAs.

In terms of biological role, this is one of the proteins that bind and probably mediate the attachment of the 5S RNA into the large ribosomal subunit, where it forms part of the central protuberance. The protein is Large ribosomal subunit protein uL18 of Streptococcus gordonii (strain Challis / ATCC 35105 / BCRC 15272 / CH1 / DL1 / V288).